The following is a 208-amino-acid chain: Harpin secretion protein HrpW (208 aa).

4 helical membrane-spanning segments follow: residues 2–22, 46–66, 149–169, and 176–196; these read LALF…CTAF, ALYG…AHDI, IGFL…NLLL, and VSPM…VSGW.

This sequence belongs to the FliP/MopC/SpaP family.

It is found in the cell membrane. Required for the secretion of harpin. The chain is Harpin secretion protein HrpW (hrpW) from Pseudomonas syringae pv. syringae.